A 75-amino-acid polypeptide reads, in one-letter code: Cytochrome c oxidase subunit 6C (75 aa).

At 1-13 (MAPEVLPKPRMRG) the chain is on the mitochondrial matrix side. Residues 14–54 (LLARRLRNHMAVAFVLSLGVAALYKFRVADQRKKAYADFYR) traverse the membrane as a helical segment. The Mitochondrial intermembrane portion of the chain corresponds to 55–75 (NYDVMKDFEEMRKAGIFQSVK).

This sequence belongs to the cytochrome c oxidase subunit 6c family. Component of the cytochrome c oxidase (complex IV, CIV), a multisubunit enzyme composed of 14 subunits. The complex is composed of a catalytic core of 3 subunits MT-CO1, MT-CO2 and MT-CO3, encoded in the mitochondrial DNA, and 11 supernumerary subunits COX4I1 (or COX4I2), COX5A, COX5B, COX6A1 (or COX6A2), COX6B1 (or COX6B2), COX6C, COX7A2 (or COX7A1), COX7B, COX7C, COX8A and NDUFA4, which are encoded in the nuclear genome. The complex exists as a monomer or a dimer and forms supercomplexes (SCs) in the inner mitochondrial membrane with NADH-ubiquinone oxidoreductase (complex I, CI) and ubiquinol-cytochrome c oxidoreductase (cytochrome b-c1 complex, complex III, CIII), resulting in different assemblies (supercomplex SCI(1)III(2)IV(1) and megacomplex MCI(2)III(2)IV(2)).

The protein resides in the mitochondrion inner membrane. Its pathway is energy metabolism; oxidative phosphorylation. In terms of biological role, component of the cytochrome c oxidase, the last enzyme in the mitochondrial electron transport chain which drives oxidative phosphorylation. The respiratory chain contains 3 multisubunit complexes succinate dehydrogenase (complex II, CII), ubiquinol-cytochrome c oxidoreductase (cytochrome b-c1 complex, complex III, CIII) and cytochrome c oxidase (complex IV, CIV), that cooperate to transfer electrons derived from NADH and succinate to molecular oxygen, creating an electrochemical gradient over the inner membrane that drives transmembrane transport and the ATP synthase. Cytochrome c oxidase is the component of the respiratory chain that catalyzes the reduction of oxygen to water. Electrons originating from reduced cytochrome c in the intermembrane space (IMS) are transferred via the dinuclear copper A center (CU(A)) of subunit 2 and heme A of subunit 1 to the active site in subunit 1, a binuclear center (BNC) formed by heme A3 and copper B (CU(B)). The BNC reduces molecular oxygen to 2 water molecules using 4 electrons from cytochrome c in the IMS and 4 protons from the mitochondrial matrix. In Homo sapiens (Human), this protein is Cytochrome c oxidase subunit 6C (COX6C).